A 234-amino-acid chain; its full sequence is Leucyl/phenylalanyl-tRNA--protein transferase (234 aa).

Belongs to the L/F-transferase family.

It localises to the cytoplasm. The catalysed reaction is N-terminal L-lysyl-[protein] + L-leucyl-tRNA(Leu) = N-terminal L-leucyl-L-lysyl-[protein] + tRNA(Leu) + H(+). It carries out the reaction N-terminal L-arginyl-[protein] + L-leucyl-tRNA(Leu) = N-terminal L-leucyl-L-arginyl-[protein] + tRNA(Leu) + H(+). It catalyses the reaction L-phenylalanyl-tRNA(Phe) + an N-terminal L-alpha-aminoacyl-[protein] = an N-terminal L-phenylalanyl-L-alpha-aminoacyl-[protein] + tRNA(Phe). In terms of biological role, functions in the N-end rule pathway of protein degradation where it conjugates Leu, Phe and, less efficiently, Met from aminoacyl-tRNAs to the N-termini of proteins containing an N-terminal arginine or lysine. This Dechloromonas aromatica (strain RCB) protein is Leucyl/phenylalanyl-tRNA--protein transferase.